Here is a 346-residue protein sequence, read N- to C-terminus: S-adenosylmethionine:tRNA ribosyltransferase-isomerase (346 aa).

Belongs to the QueA family. As to quaternary structure, monomer.

It is found in the cytoplasm. It catalyses the reaction 7-aminomethyl-7-carbaguanosine(34) in tRNA + S-adenosyl-L-methionine = epoxyqueuosine(34) in tRNA + adenine + L-methionine + 2 H(+). It participates in tRNA modification; tRNA-queuosine biosynthesis. Transfers and isomerizes the ribose moiety from AdoMet to the 7-aminomethyl group of 7-deazaguanine (preQ1-tRNA) to give epoxyqueuosine (oQ-tRNA). In Lactococcus lactis subsp. cremoris (strain MG1363), this protein is S-adenosylmethionine:tRNA ribosyltransferase-isomerase.